A 190-amino-acid polypeptide reads, in one-letter code: UPF0200 protein MTH_434 (190 aa).

Gly-10–Gly-17 contributes to the ATP binding site.

This sequence belongs to the UPF0200 family.

This chain is UPF0200 protein MTH_434, found in Methanothermobacter thermautotrophicus (strain ATCC 29096 / DSM 1053 / JCM 10044 / NBRC 100330 / Delta H) (Methanobacterium thermoautotrophicum).